Here is a 373-residue protein sequence, read N- to C-terminus: Cell division protein FtsZ 1 (373 aa).

Residues 51–55, 138–140, Glu-169, Arg-173, and Asp-216 each bind GTP; these read GAGCN and GTG. The tract at residues 354 to 373 is disordered; sequence EESYFGEEERRPIKLDLDEL. Over residues 360 to 373 the composition is skewed to basic and acidic residues; the sequence is EEERRPIKLDLDEL.

It belongs to the FtsZ family. As to quaternary structure, homodimer. Polymerizes to form a dynamic ring structure in a strictly GTP-dependent manner. Interacts directly with several other division proteins.

The protein resides in the cytoplasm. Its function is as follows. Essential cell division protein that forms a contractile ring structure (Z ring) at the future cell division site. The regulation of the ring assembly controls the timing and the location of cell division. One of the functions of the FtsZ ring is to recruit other cell division proteins to the septum to produce a new cell wall between the dividing cells. Binds GTP and shows GTPase activity. The protein is Cell division protein FtsZ 1 of Thermococcus kodakarensis (strain ATCC BAA-918 / JCM 12380 / KOD1) (Pyrococcus kodakaraensis (strain KOD1)).